The sequence spans 739 residues: Pre-mRNA-splicing factor ATP-dependent RNA helicase ddx-15 (739 aa).

A compositionally biased stretch (basic and acidic residues) spans Met1–Arg19. The segment at Met1 to Asn49 is disordered. Basic residues predominate over residues Ser20 to Arg35. In terms of domain architecture, Helicase ATP-binding spans Met86 to Pro257. Gly99–Thr106 serves as a coordination point for ATP. The DEAH box motif lies at Asp204–His207. The Helicase C-terminal domain occupies Thr282–Gly462.

Belongs to the DEAD box helicase family. DEAH subfamily. DDX15/PRP43 sub-subfamily.

The protein resides in the nucleus. It catalyses the reaction ATP + H2O = ADP + phosphate + H(+). Pre-mRNA processing factor involved in disassembly of spliceosomes after the release of mature mRNA. The protein is Pre-mRNA-splicing factor ATP-dependent RNA helicase ddx-15 of Caenorhabditis elegans.